Consider the following 284-residue polypeptide: Undecaprenyl-diphosphatase (284 aa).

A run of 8 helical transmembrane segments spans residues 7-27, 44-64, 90-110, 116-136, 167-187, 197-217, 229-249, and 259-279; these read IILG…TGHL, EMFD…LYFH, LWLK…PLND, FYHF…FIVI, VLSL…ALLI, FTFF…ILHF, FGVL…AIKF, and FTFF…YAAF.

This sequence belongs to the UppP family.

It localises to the cell membrane. The enzyme catalyses di-trans,octa-cis-undecaprenyl diphosphate + H2O = di-trans,octa-cis-undecaprenyl phosphate + phosphate + H(+). Functionally, catalyzes the dephosphorylation of undecaprenyl diphosphate (UPP). Confers resistance to bacitracin. The sequence is that of Undecaprenyl-diphosphatase from Lactococcus lactis subsp. cremoris (strain MG1363).